The following is a 181-amino-acid chain: HGPRTase-like protein 2 (181 aa).

The protein belongs to the purine/pyrimidine phosphoribosyltransferase family. Archaeal HPRT subfamily.

Its function is as follows. May catalyze a purine salvage reaction, the substrate is unknown. The chain is HGPRTase-like protein 2 from Natrialba magadii (strain ATCC 43099 / DSM 3394 / CCM 3739 / CIP 104546 / IAM 13178 / JCM 8861 / NBRC 102185 / NCIMB 2190 / MS3) (Natronobacterium magadii).